Reading from the N-terminus, the 141-residue chain is Nucleoside diphosphate kinase (141 aa).

ATP is bound by residues Lys11, Phe59, Arg87, Thr93, Arg104, and Asn114. The Pros-phosphohistidine intermediate role is filled by His117.

This sequence belongs to the NDK family. Homotetramer. Requires Mg(2+) as cofactor.

It is found in the cytoplasm. It catalyses the reaction a 2'-deoxyribonucleoside 5'-diphosphate + ATP = a 2'-deoxyribonucleoside 5'-triphosphate + ADP. It carries out the reaction a ribonucleoside 5'-diphosphate + ATP = a ribonucleoside 5'-triphosphate + ADP. Major role in the synthesis of nucleoside triphosphates other than ATP. The ATP gamma phosphate is transferred to the NDP beta phosphate via a ping-pong mechanism, using a phosphorylated active-site intermediate. The chain is Nucleoside diphosphate kinase from Pseudomonas entomophila (strain L48).